A 176-amino-acid chain; its full sequence is NAD(P)H-quinone oxidoreductase subunit 6, chloroplastic (176 aa).

5 helical membrane passes run I10–T30, P32–L52, A61–M81, L92–I112, and F152–A172.

Belongs to the complex I subunit 6 family. NDH is composed of at least 16 different subunits, 5 of which are encoded in the nucleus.

The protein resides in the plastid. It is found in the chloroplast thylakoid membrane. It carries out the reaction a plastoquinone + NADH + (n+1) H(+)(in) = a plastoquinol + NAD(+) + n H(+)(out). It catalyses the reaction a plastoquinone + NADPH + (n+1) H(+)(in) = a plastoquinol + NADP(+) + n H(+)(out). Its function is as follows. NDH shuttles electrons from NAD(P)H:plastoquinone, via FMN and iron-sulfur (Fe-S) centers, to quinones in the photosynthetic chain and possibly in a chloroplast respiratory chain. The immediate electron acceptor for the enzyme in this species is believed to be plastoquinone. Couples the redox reaction to proton translocation, and thus conserves the redox energy in a proton gradient. The protein is NAD(P)H-quinone oxidoreductase subunit 6, chloroplastic (ndhG) of Drimys granadensis.